Consider the following 382-residue polypeptide: 3-dehydroquinate synthase (382 aa).

Residues 81-86, 115-119, 139-140, lysine 152, and lysine 161 contribute to the NAD(+) site; these read EGEGSK, GVVGD, and TS. 3 residues coordinate Zn(2+): glutamate 194, histidine 256, and histidine 274.

It belongs to the sugar phosphate cyclases superfamily. Dehydroquinate synthase family. It depends on Co(2+) as a cofactor. Zn(2+) serves as cofactor. Requires NAD(+) as cofactor.

It is found in the cytoplasm. The catalysed reaction is 7-phospho-2-dehydro-3-deoxy-D-arabino-heptonate = 3-dehydroquinate + phosphate. The protein operates within metabolic intermediate biosynthesis; chorismate biosynthesis; chorismate from D-erythrose 4-phosphate and phosphoenolpyruvate: step 2/7. Functionally, catalyzes the conversion of 3-deoxy-D-arabino-heptulosonate 7-phosphate (DAHP) to dehydroquinate (DHQ). The sequence is that of 3-dehydroquinate synthase from Bradyrhizobium sp. (strain BTAi1 / ATCC BAA-1182).